A 1158-amino-acid polypeptide reads, in one-letter code: ATP-dependent helicase/deoxyribonuclease subunit B (1158 aa).

The UvrD-like helicase ATP-binding domain maps to 1–275 (MTLHAYLGRA…QYFNQLYRFN (275 aa)). 8 to 15 (GRAGTGKS) is an ATP binding site. Residues 269–583 (NQLYRFNNQD…SIGTMDLAKV (315 aa)) enclose the UvrD-like helicase C-terminal domain. [4Fe-4S] cluster contacts are provided by C784, C1112, C1115, and C1121.

It belongs to the helicase family. AddB/RexB type 1 subfamily. Heterodimer of AddA and AddB. Mg(2+) is required as a cofactor. It depends on [4Fe-4S] cluster as a cofactor.

Its function is as follows. The heterodimer acts as both an ATP-dependent DNA helicase and an ATP-dependent, dual-direction single-stranded exonuclease. Recognizes the chi site generating a DNA molecule suitable for the initiation of homologous recombination. The AddB subunit has 5' -&gt; 3' nuclease activity but not helicase activity. The protein is ATP-dependent helicase/deoxyribonuclease subunit B of Staphylococcus aureus (strain MRSA252).